Here is an 85-residue protein sequence, read N- to C-terminus: Beta-insect depressant toxin BmKITa (85 aa).

The signal sequence occupies residues 1–21; that stretch reads MKLFLLLLISASMLIDGLVNA. In terms of domain architecture, LCN-type CS-alpha/beta spans 22 to 82; the sequence is DGYIRGSNGC…TWKSESNTCG (61 aa). 4 disulfides stabilise this stretch: Cys31–Cys81, Cys35–Cys56, Cys42–Cys63, and Cys46–Cys65. Position 82 is a glycine amide (Gly82).

In terms of tissue distribution, expressed by the venom gland.

It is found in the secreted. Its function is as follows. Depressant insect beta-toxins cause a transient contraction paralysis followed by a slow flaccid paralysis. They bind voltage-independently at site-4 of sodium channels (Nav) and shift the voltage of activation toward more negative potentials thereby affecting sodium channel activation and promoting spontaneous and repetitive firing. This toxin also displays an evident analgesic effect but is devoid of any toxicity on mice. This is Beta-insect depressant toxin BmKITa from Olivierus martensii (Manchurian scorpion).